Consider the following 2067-residue polypeptide: Separin (2067 aa).

Disordered regions lie at residues 51–91, 140–167, 1316–1363, and 1449–1478; these read RTAR…AQDV, KKDASPTKRGTTTKGRVKTSQPDLTDNE, DLEE…SVEA, and LEPKAASESSSKSATRKTRAPTRGTRTKAQ. Residues 55–86 are compositionally biased toward low complexity; the sequence is GTKATATNATASSRAKTTRTKSTSTSTTRTKT. 2 stretches are compositionally biased toward low complexity: residues 1333–1354 and 1449–1461; these read TRQPATTATRRTRSATTSARST and LEPKAASESSSKS. One can recognise a Peptidase C50 domain in the interval 1880–1975; that stretch reads RRNGTYILNP…SGTLTEAGEY (96 aa). The active site involves Cys-1964.

The protein localises to the nucleus. It carries out the reaction All bonds known to be hydrolyzed by this endopeptidase have arginine in P1 and an acidic residue in P4. P6 is often occupied by an acidic residue or by a hydroxy-amino-acid residue, the phosphorylation of which enhances cleavage.. Required for nuclear division. Could function in the mitotic spindle. In Emericella nidulans (strain FGSC A4 / ATCC 38163 / CBS 112.46 / NRRL 194 / M139) (Aspergillus nidulans), this protein is Separin (bimB).